The primary structure comprises 515 residues: Galactose/methyl galactoside import ATP-binding protein MglA (515 aa).

ABC transporter domains follow at residues 8–243 (LEMR…VGRE) and 254–499 (IPKE…AKYL). 40 to 47 (GENGAGKS) contributes to the ATP binding site.

This sequence belongs to the ABC transporter superfamily. Galactose/methyl galactoside importer (TC 3.A.1.2.3) family. As to quaternary structure, the complex is composed of one ATP-binding protein (MglA), two transmembrane proteins (MglC) and a solute-binding protein (MglB).

It localises to the cell membrane. It catalyses the reaction D-galactose(out) + ATP + H2O = D-galactose(in) + ADP + phosphate + H(+). It carries out the reaction methyl beta-D-galactoside(out) + ATP + H2O = methyl beta-D-galactoside(in) + ADP + phosphate + H(+). Part of the ABC transporter complex MglABC involved in galactose/methyl galactoside import. Responsible for energy coupling to the transport system. This Clostridium perfringens (strain SM101 / Type A) protein is Galactose/methyl galactoside import ATP-binding protein MglA.